The following is a 348-amino-acid chain: MAASKLLVSDIASVVDHVPSNYVRPVSDRPKMSEVQTSGDSIPLIDLHDLHGPNRADIINQFAHACSSCGFFQIKNHGVPEETIKKMMNAAREFFRQSESERVKHYSADTKKTTRLSTSFNVSKEKVSNWRDFLRLHCYPIEDFINEWPSTPISFREVTAEYATSVRALVLTLLEAISESLGLAKDRVSNTIGKHGQHMAINYYPRCPQPELTYGLPGHKDANLITVLLQDEVSGLQVFKDGKWIAVNPVPNTFIVNLGDQMQVISNEKYKSVLHRAVVNSDMERISIPTFYCPSEDAVISPAQELINEEEDSPAIYRNFTYAEYFEKFWDTAFDTESCIDSFKASTA.

A Fe2OG dioxygenase domain is found at 194-294; the sequence is KHGQHMAINY…RISIPTFYCP (101 aa). Fe cation is bound by residues histidine 219, aspartate 221, and histidine 275. Arginine 285 serves as a coordination point for 2-oxoglutarate.

It belongs to the iron/ascorbate-dependent oxidoreductase family. The cofactor is Fe(2+).

It carries out the reaction salicylate + NADH + O2 + H(+) = 2,3-dihydroxybenzoate + NAD(+) + H2O. Functionally, converts salicylic acid (SA) to 2,3-dihydroxybenzoic acid (2,3-DHBA). Negative regulator of defense against Hyaloperonospora arabidopsidis. In terms of biological role, (Microbial infection) Confers susceptibility to the downy mildew pathogen Hyaloperonospora arabidopsidis. The chain is Protein DMR6-LIKE OXYGENASE 2 from Arabidopsis thaliana (Mouse-ear cress).